A 224-amino-acid polypeptide reads, in one-letter code: MESGAYGAANAGGSFDLRRFLSQPQVVTRLVSMVLALIVFSCIFGEGYTNIHTSDQLYCVFNQNEDACRYGSAIGVLAFLASAFFLVVDAFFSQISNATDRKYLVIGDLLFSALWTFLWFVGFCFLTNQWAATKPQDVRVGADSARAAITFSFFSIFSWGVLASLAYQRYKAGVDAFIQNYVDPTPDPNTAYASYPSASVENYQQPPFTQNVETTEGYQPPPVY.

The residue at position 1 (methionine 1) is an N-acetylmethionine. Serine 3 is modified (phosphoserine). Residues 20–171 (FLSQPQVVTR…LASLAYQRYK (152 aa)) form the MARVEL domain. 4 consecutive transmembrane segments (helical) span residues 31–51 (VSMV…YTNI), 72–92 (SAIG…DAFF), 105–125 (VIGD…GFCF), and 147–167 (AAIT…SLAY).

It belongs to the synaptogyrin family. In terms of processing, may be tyrosine phosphorylated by Src.

The protein resides in the cytoplasmic vesicle membrane. It localises to the cytoplasmic vesicle. Its subcellular location is the secretory vesicle. It is found in the synaptic vesicle membrane. May play a role in regulated exocytosis. In neuronal cells, modulates the localization of synaptophysin/SYP into synaptic-like microvesicles and may therefore play a role in the formation and/or the maturation of this vesicles. May also play a role in GLUT4 storage and transport to the plasma membrane. The polypeptide is Synaptogyrin-2 (Mus musculus (Mouse)).